A 313-amino-acid polypeptide reads, in one-letter code: 4-hydroxy-3-methylbut-2-enyl diphosphate reductase (313 aa).

Cysteine 12 lines the [4Fe-4S] cluster pocket. Residues histidine 41 and histidine 74 each contribute to the (2E)-4-hydroxy-3-methylbut-2-enyl diphosphate site. Positions 41 and 74 each coordinate dimethylallyl diphosphate. Isopentenyl diphosphate-binding residues include histidine 41 and histidine 74. Cysteine 96 contacts [4Fe-4S] cluster. Residue histidine 124 coordinates (2E)-4-hydroxy-3-methylbut-2-enyl diphosphate. Histidine 124 contributes to the dimethylallyl diphosphate binding site. Histidine 124 serves as a coordination point for isopentenyl diphosphate. The Proton donor role is filled by glutamate 126. Threonine 164 is a binding site for (2E)-4-hydroxy-3-methylbut-2-enyl diphosphate. Cysteine 194 contacts [4Fe-4S] cluster. (2E)-4-hydroxy-3-methylbut-2-enyl diphosphate-binding residues include serine 222, serine 223, asparagine 224, and serine 266. Residues serine 222, serine 223, asparagine 224, and serine 266 each coordinate dimethylallyl diphosphate. Residues serine 222, serine 223, asparagine 224, and serine 266 each contribute to the isopentenyl diphosphate site.

This sequence belongs to the IspH family. Requires [4Fe-4S] cluster as cofactor.

The catalysed reaction is isopentenyl diphosphate + 2 oxidized [2Fe-2S]-[ferredoxin] + H2O = (2E)-4-hydroxy-3-methylbut-2-enyl diphosphate + 2 reduced [2Fe-2S]-[ferredoxin] + 2 H(+). It carries out the reaction dimethylallyl diphosphate + 2 oxidized [2Fe-2S]-[ferredoxin] + H2O = (2E)-4-hydroxy-3-methylbut-2-enyl diphosphate + 2 reduced [2Fe-2S]-[ferredoxin] + 2 H(+). Its pathway is isoprenoid biosynthesis; dimethylallyl diphosphate biosynthesis; dimethylallyl diphosphate from (2E)-4-hydroxy-3-methylbutenyl diphosphate: step 1/1. It functions in the pathway isoprenoid biosynthesis; isopentenyl diphosphate biosynthesis via DXP pathway; isopentenyl diphosphate from 1-deoxy-D-xylulose 5-phosphate: step 6/6. Its function is as follows. Catalyzes the conversion of 1-hydroxy-2-methyl-2-(E)-butenyl 4-diphosphate (HMBPP) into a mixture of isopentenyl diphosphate (IPP) and dimethylallyl diphosphate (DMAPP). Acts in the terminal step of the DOXP/MEP pathway for isoprenoid precursor biosynthesis. This is 4-hydroxy-3-methylbut-2-enyl diphosphate reductase from Burkholderia pseudomallei (strain 1026b).